Here is a 466-residue protein sequence, read N- to C-terminus: Glutamate decarboxylase (466 aa).

Lys277 is modified (N6-(pyridoxal phosphate)lysine).

Belongs to the group II decarboxylase family. Pyridoxal 5'-phosphate is required as a cofactor.

It catalyses the reaction L-glutamate + H(+) = 4-aminobutanoate + CO2. Its function is as follows. Converts internalized glutamate to GABA and increases the internal pH. Involved in glutamate-dependent acid resistance. This is Glutamate decarboxylase (gadB) from Lactococcus lactis subsp. lactis (strain IL1403) (Streptococcus lactis).